Consider the following 101-residue polypeptide: MKKLAVVGDPDFTIGFMLAGISDIYEVTSDEEIVKAVEDVLKRDDVGVVIIKQEYLKKLPPVLRREIDEKVEPTFVSVGGTGGVEEIREKIRKAIGVDLWK.

The protein belongs to the V-ATPase F subunit family. As to quaternary structure, has multiple subunits with at least A(3), B(3), C, D, E, F, H, I and proteolipid K(x).

It is found in the cell membrane. Component of the A-type ATP synthase that produces ATP from ADP in the presence of a proton gradient across the membrane. The chain is A-type ATP synthase subunit F from Archaeoglobus fulgidus (strain ATCC 49558 / DSM 4304 / JCM 9628 / NBRC 100126 / VC-16).